A 426-amino-acid polypeptide reads, in one-letter code: Histone-binding protein RBBP7 (426 aa).

Alanine 2 carries the N-acetylalanine modification. Serine 3 carries the post-translational modification Phosphoserine. N6-acetyllysine; alternate is present on lysine 4. Residue lysine 4 forms a Glycyl lysine isopeptide (Lys-Gly) (interchain with G-Cter in SUMO2); alternate linkage. Lysine 4 participates in a covalent cross-link: Glycyl lysine isopeptide (Lys-Gly) (interchain with G-Cter in ubiquitin); alternate. The residue at position 10 (threonine 10) is a Phosphothreonine. WD repeat units lie at residues 47–122 (QWLP…KINH), 128–173 (RARY…LRLR), 181–217 (GLSWNSNLSGHLLSASDDHTVCLWDINAGPKEGKIVD), 228–269 (VVED…HLVD), 275–312 (VNCLSFNPYSEFILATGSADKTVALWDLRNLKLKLHTF), 318–370 (EIFQ…LFIH), and 377–404 (ISDFSWNPNEPWVICSVSEDNIMQIWQM). A Phosphoserine modification is found at serine 95. Lysine 101 participates in a covalent cross-link: Glycyl lysine isopeptide (Lys-Gly) (interchain with G-Cter in SUMO2). The residue at position 119 (lysine 119) is an N6-acetyllysine. Lysine 155 participates in a covalent cross-link: Glycyl lysine isopeptide (Lys-Gly) (interchain with G-Cter in SUMO2). Lysine 159 is subject to N6-acetyllysine; alternate. Lysine 159 participates in a covalent cross-link: Glycyl lysine isopeptide (Lys-Gly) (interchain with G-Cter in SUMO2); alternate. A Phosphoserine modification is found at serine 355.

Belongs to the WD repeat RBAP46/RBAP48/MSI1 family. As to quaternary structure, binds directly to helix 1 of the histone fold of histone H4, a region that is not accessible when H4 is in chromatin. Subunit of the type B histone acetyltransferase (HAT) complex, composed of RBBP7 and HAT1. Subunit of the core histone deacetylase (HDAC) complex, which is composed of HDAC1, HDAC2, RBBP4 and RBBP7. The core HDAC complex associates with SIN3A, ARID4B/SAP180, SAP18, SAP30, SAP130, SUDS3/SAP45 and possibly ARID4A/RBP1 and ING1 to form the SIN3 HDAC complex. Component of the nucleosome remodeling and deacetylase (NuRD) repressor complex, composed of core proteins MTA1, MTA2, MTA3, RBBP4, RBBP7, HDAC1, HDAC2, MBD2, MBD3, and peripherally associated proteins CDK2AP1, CDK2AP2, GATAD2A, GATAD2B, CHD3, CHD4 and CHD5. The exact stoichiometry of the NuRD complex is unknown, and some subunits such as MBD2 and MBD3, GATAD2A and GATAD2B, and CHD3, CHD4 and CHD5 define mutually exclusive NuRD complexes. The NuRD complex may interact with MBD3L1. The NuRD complex may interact with MBD3L2. Subunit of the PRC2/EED-EZH2 complex, which is composed of at least EED, EZH2, RBBP4, RBBP7 and SUZ12. The PRC2/EED-EZH2 complex may also associate with HDAC1. Component of the NURF-1 ISWI chromatin remodeling complex (also called the nucleosome-remodeling factor (NURF) complex) at least composed of SMARCA1, BPTF, RBBP4 and RBBP7. Within the complex interacts with SMARCA1. Component of the BPFT-SMARCA1 complex at least composed of SMARCA1, BPFT, RBBP4 and RBBP7; the complex is catalytically inactive and does not remodel chromatin. Within the complex interacts with SMARCA1. Interacts with BRCA1. Interacts with CDK2AP1. Interacts with CENPA. Interacts with CHD3. Interacts with CHD4. Interacts with CREBBP, and this interaction may be enhanced by the binding of phosphorylated CREB1 to CREBBP. Interacts with HDAC7. Interacts with MTA1. Interacts with PWWP2B. Interacts with RB1 (via viral protein-binding domain). Interacts with SUV39H1.

The protein resides in the nucleus. In terms of biological role, core histone-binding subunit that may target chromatin remodeling factors, histone acetyltransferases and histone deacetylases to their histone substrates in a manner that is regulated by nucleosomal DNA. Component of several complexes which regulate chromatin metabolism. These include the type B histone acetyltransferase (HAT) complex, which is required for chromatin assembly following DNA replication; the core histone deacetylase (HDAC) complex, which promotes histone deacetylation and consequent transcriptional repression; the nucleosome remodeling and histone deacetylase complex (the NuRD complex), which promotes transcriptional repression by histone deacetylation and nucleosome remodeling; and the PRC2/EED-EZH2 complex, which promotes repression of homeotic genes during development; and the NURF (nucleosome remodeling factor) complex. In Pongo abelii (Sumatran orangutan), this protein is Histone-binding protein RBBP7 (RBBP7).